The primary structure comprises 271 residues: Insulin-like growth factor-binding protein 5 (271 aa).

A signal peptide spans 1–19; it reads MVISVVLLLLAAYAVPAQG. The 81-residue stretch at 22–102 folds into the IGFBP N-terminal domain; it reads SFVHCEPCDE…LHGRGVCLNE (81 aa). 6 disulfides stabilise this stretch: Cys26/Cys52, Cys29/Cys54, Cys37/Cys55, Cys44/Cys58, Cys66/Cys79, and Cys73/Cys99. A compositionally biased stretch (basic and acidic residues) spans 109-121; it reads TKIERDSREHEEP. The interval 109–129 is disordered; sequence TKIERDSREHEEPTTSEMAEE. Position 115 is a phosphoserine (Ser115). The Thyroglobulin type-1 domain occupies 188–262; the sequence is QGPCRRHMEA…MEYVDGDFQC (75 aa). 3 cysteine pairs are disulfide-bonded: Cys191–Cys218, Cys229–Cys240, and Cys242–Cys262.

As to quaternary structure, interacts with IGF1; this interaction enhances the growth stimulatory effects of IGF1 on fibroblasts. Interacts with CAV1; this interaction allows trafficking of IGFBP5 from the plasma membrane to the nucleus. Interacts with NCL; this interaction is necessary for IGFBP5 localization to the nucleus. As to expression, most abundant in kidney, uterus and gastrocnemius muscle.

It is found in the secreted. It localises to the cytoplasm. Its subcellular location is the nucleus. Multifunctional protein that plays a critical role in regulating the availability of IGFs to their receptors and thereby regulates IGF-mediated cellular processes including proliferation, differentiation, and apoptosis in a cell-type specific manner. Increases the cell proliferation of osteoblasts, intestinal smooth muscle cells and neuroblastoma cells. Enhances adhesion and survival of epithelial cells but decreases adhesion of mesenchymal cells. Once secreted, acts as a major mediator of mTORC1-dependent feedback inhibition of IGF1 signaling. Also plays a role in the induction of extracellular matrix (ECM) production and deposition independently of its nuclear translocation and binding to IGFs. Acts itself as a growth factor that can act independently of IGFs to regulate bone formation. Acts as a ligand for the ROR1 receptor which triggers formation of ROR1/HER2 heterodimer to enhance CREB oncogenic signaling. The sequence is that of Insulin-like growth factor-binding protein 5 (Igfbp5) from Mus musculus (Mouse).